We begin with the raw amino-acid sequence, 383 residues long: S-adenosylmethionine synthase (383 aa).

Histidine 15 is a binding site for ATP. Aspartate 17 is a binding site for Mg(2+). A K(+)-binding site is contributed by glutamate 43. Residues glutamate 56 and glutamine 99 each coordinate L-methionine. Positions 99–109 (QSPDINQGVDR) are flexible loop. ATP is bound by residues 164 to 166 (DAK), 230 to 231 (RF), aspartate 239, 245 to 246 (RK), alanine 262, and lysine 266. Residue aspartate 239 participates in L-methionine binding. Lysine 270 contributes to the L-methionine binding site.

Belongs to the AdoMet synthase family. Homotetramer; dimer of dimers. Requires Mg(2+) as cofactor. K(+) serves as cofactor.

The protein resides in the cytoplasm. It carries out the reaction L-methionine + ATP + H2O = S-adenosyl-L-methionine + phosphate + diphosphate. The protein operates within amino-acid biosynthesis; S-adenosyl-L-methionine biosynthesis; S-adenosyl-L-methionine from L-methionine: step 1/1. In terms of biological role, catalyzes the formation of S-adenosylmethionine (AdoMet) from methionine and ATP. The overall synthetic reaction is composed of two sequential steps, AdoMet formation and the subsequent tripolyphosphate hydrolysis which occurs prior to release of AdoMet from the enzyme. In Shewanella sp. (strain W3-18-1), this protein is S-adenosylmethionine synthase.